The sequence spans 92 residues: Small ribosomal subunit protein uS19 (92 aa).

The protein belongs to the universal ribosomal protein uS19 family.

Protein S19 forms a complex with S13 that binds strongly to the 16S ribosomal RNA. The polypeptide is Small ribosomal subunit protein uS19 (Buchnera aphidicola subsp. Baizongia pistaciae (strain Bp)).